The chain runs to 243 residues: UPF0758 protein PCC7424_2073 (243 aa).

The MPN domain maps to 112 to 235 (VEINDPVSAV…HQSLRTVTDL (124 aa)). Residues His184, His186, and Asp197 each coordinate Zn(2+). The JAMM motif motif lies at 184-197 (HNHPSGNVAPSQED).

It belongs to the UPF0758 family.

The protein is UPF0758 protein PCC7424_2073 of Gloeothece citriformis (strain PCC 7424) (Cyanothece sp. (strain PCC 7424)).